We begin with the raw amino-acid sequence, 703 residues long: MATTHTLLSFDDLEFLLHRKDLTDLYGERCGTLNLVINPYELFLPDELDDDCCDDPFNCCFPDVYASIGTEYSYIDPPELIHEEHCATNGTWPNGDPCEPILPPFTITGTHHYYATKPGEVVSGILSKLGSSWDPSLRSTADVSNSFTFRAESDGPGSAEIVTEEQGTVVQQQPAPAPTALATLATASTGKSVEQEWMTFFSYHTSINWSTVESQGKILYSQALNPSINPYLDHIAKLYSTWSGGIDVRFTVSGSGVFGGKLAALLVPPGVEPIESVSMLQYPHVLFDARQTEPVIFTIPDIRKTLFHSMDETDTTKLVINPYENGVENKTTCSITVETRPSADFTFALLKPPGSLIKHGSIPSDLIPRNSAHWMGNRWWSTISGFSVQPRVFQSNRHFDFDSTTTGWSTPYYVPIEIKIQGKVGSNNKWFHVIDTDKALVPGIPDGWPDTTIPDETKATNGNFSYGESYRAGSTTIKPNENSTHFKGTYICGTLSTVEIPENDEQQIKTEAEKKSQTMYVVTADFKDTIVKPQHKISPQKLVVYFDGPEKDLTMSATLSPLGYTLVDEQPVGSVSSRVVRIATLPEAFTQGGNYPIFYVNKIKVGYFDRATTNCYNSQILMTSQRLAEGNYNLPPDSLAVYRITDSSSQWFDIGINHDGFSYVGLSDLPNDLSFPLTSTFMGVQLARVKLASKVKAHTITAK.

This sequence belongs to the caliciviridae capsid protein family. Homodimer. Homomultimer. Interacts with the minor capsid protein VP2. May bind to VP3 and Vpg proteins. In terms of processing, cleaved by the viral protease to produce mature capsid protein.

It is found in the virion. The protein localises to the host cytoplasm. Functionally, capsid protein self assembles to form an icosahedral capsid with a T=3 symmetry, about 38 nm in diameter, and consisting of 180 capsid proteins. A smaller form of capsid with a diameter of 23 nm might be capsid proteins assembled as icosahedron with T=1 symmetry. The capsid encapsulates the genomic RNA and is decorated with VP2 proteins. This San Miguel sea lion virus serotype 4 (SMSV-4) protein is Capsid protein VP1.